We begin with the raw amino-acid sequence, 230 residues long: Secretory carrier-associated membrane protein 4 (230 aa).

The Cytoplasmic segment spans residues M1–R39. Helical transmembrane passes span I40–A60, W61–F81, M106–F126, and V149–I169. Over V170 to P230 the chain is Cytoplasmic. The residue at position 194 (T194) is a Phosphothreonine.

The protein belongs to the SCAMP family.

Its subcellular location is the membrane. Its function is as follows. Probably involved in membrane protein trafficking. This Mus musculus (Mouse) protein is Secretory carrier-associated membrane protein 4 (Scamp4).